The chain runs to 215 residues: Adenylate kinase (215 aa).

10–15 (GAGKGT) lines the ATP pocket. An NMP region spans residues 30 to 59 (STGDMLREAVAAGTELGKKVKEIIEKGLLV). AMP contacts are provided by residues Thr31, Arg36, 57 to 59 (LLV), 85 to 88 (GFPR), and Gln92. The segment at 126–163 (SRRVCPSCGKVYNLLTIKPKNDMLCDDCNIGLIQREDD) is LID. ATP is bound at residue Arg127. Zn(2+) is bound by residues Cys130 and Cys133. ATP is bound at residue 136–137 (VY). 2 residues coordinate Zn(2+): Cys150 and Cys153. Arg160 and Arg171 together coordinate AMP. Leu199 contacts ATP.

The protein belongs to the adenylate kinase family. As to quaternary structure, monomer.

The protein resides in the cytoplasm. The catalysed reaction is AMP + ATP = 2 ADP. It participates in purine metabolism; AMP biosynthesis via salvage pathway; AMP from ADP: step 1/1. In terms of biological role, catalyzes the reversible transfer of the terminal phosphate group between ATP and AMP. Plays an important role in cellular energy homeostasis and in adenine nucleotide metabolism. The protein is Adenylate kinase of Kosmotoga olearia (strain ATCC BAA-1733 / DSM 21960 / TBF 19.5.1).